The following is a 429-amino-acid chain: GDP-fucose protein O-fucosyltransferase 2 (429 aa).

The signal sequence occupies residues Met-1–Ala-21. A GDP-beta-L-fucose-binding site is contributed by Pro-53–Asn-57. Glu-54 acts as the Proton acceptor in catalysis. Cys-161 and Cys-192 are oxidised to a cystine. 3 N-linked (GlcNAc...) asparagine glycosylation sites follow: Asn-189, Asn-209, and Asn-259. GDP-beta-L-fucose-binding positions include His-292–Arg-294, Asp-371, and Thr-388–Phe-389. Cysteines 412 and 419 form a disulfide.

The protein belongs to the glycosyltransferase 68 family. Isoform A is expressed in fetal liver and peripheral blood lymphocytes. Isoform B is expressed in spleen, lung, testis, bone marrow, thymus, pancreas, prostate, fetal brain, fetal liver and fetal kidney. Isoform C is expressed in brain, heart, spleen, liver, lung, stomach, testis, placenta, skin, thymus, pancreas, mammary gland, prostate, fetal brain, fetal liver and fetal heart.

Its subcellular location is the endoplasmic reticulum. The protein localises to the golgi apparatus. It carries out the reaction L-seryl-[protein] + GDP-beta-L-fucose = 3-O-(alpha-L-fucosyl)-L-seryl-[protein] + GDP + H(+). It catalyses the reaction L-threonyl-[protein] + GDP-beta-L-fucose = 3-O-(alpha-L-fucosyl)-L-threonyl-[protein] + GDP + H(+). It functions in the pathway protein modification; protein glycosylation. Inhibited by EDTA and by Zn(2+). Catalyzes the reaction that attaches fucose through an O-glycosidic linkage to a conserved serine or threonine residue in the consensus sequence C1-X-X-S/T-C2 of thrombospondin type I repeats (TSRs) where C1 and C2 are the first and second cysteines of the repeat, respectively. O-fucosylates members of several protein families including the ADAMTS, the thrombospondin (TSP) and spondin families. Required for the proper secretion of ADAMTS family members such as ADAMTSL1 and ADAMTS13. The O-fucosylation of TSRs is also required for restricting epithelial to mesenchymal transition (EMT), maintaining the correct patterning of mesoderm and localization of the definite endoderm. The protein is GDP-fucose protein O-fucosyltransferase 2 (POFUT2) of Homo sapiens (Human).